The sequence spans 219 residues: Predicted GPI-anchored protein 6 (219 aa).

A signal peptide spans 1 to 19 (MQFQTLLVVAGSLVASTLA). N-linked (GlcNAc...) asparagine glycans are attached at residues Asn-21, Asn-173, and Asn-188. Gly-194 carries the GPI-anchor amidated glycine lipid modification. Positions 195 to 219 (GAVGGASNQITVGFAAIAGLAAILL) are cleaved as a propeptide — removed in mature form.

This sequence belongs to the flocculin family. In terms of processing, the GPI-anchor is attached to the protein in the endoplasmic reticulum and serves to target the protein to the cell surface. There, the glucosamine-inositol phospholipid moiety is cleaved off and the GPI-modified mannoprotein is covalently attached via its lipidless GPI glycan remnant to the 1,6-beta-glucan of the outer cell wall layer.

The protein localises to the secreted. The protein resides in the cell wall. It localises to the membrane. Functionally, probable cell wall protein that participates directly in adhesive cell-cell interactions. This Candida albicans (strain SC5314 / ATCC MYA-2876) (Yeast) protein is Predicted GPI-anchored protein 6 (PGA6).